Here is a 282-residue protein sequence, read N- to C-terminus: Bifunctional protein FolD (282 aa).

Residues 165-167 (GRS), Ser190, and Thr231 contribute to the NADP(+) site.

Belongs to the tetrahydrofolate dehydrogenase/cyclohydrolase family. Homodimer.

The enzyme catalyses (6R)-5,10-methylene-5,6,7,8-tetrahydrofolate + NADP(+) = (6R)-5,10-methenyltetrahydrofolate + NADPH. The catalysed reaction is (6R)-5,10-methenyltetrahydrofolate + H2O = (6R)-10-formyltetrahydrofolate + H(+). The protein operates within one-carbon metabolism; tetrahydrofolate interconversion. Its function is as follows. Catalyzes the oxidation of 5,10-methylenetetrahydrofolate to 5,10-methenyltetrahydrofolate and then the hydrolysis of 5,10-methenyltetrahydrofolate to 10-formyltetrahydrofolate. In Clostridium botulinum (strain Alaska E43 / Type E3), this protein is Bifunctional protein FolD.